A 282-amino-acid polypeptide reads, in one-letter code: Acetyl-coenzyme A carboxylase carboxyl transferase subunit beta (282 aa).

The region spanning L29 to D282 is the CoA carboxyltransferase N-terminal domain. Residues C33, C36, C51, and C54 each coordinate Zn(2+). The C4-type zinc finger occupies C33–C54.

It belongs to the AccD/PCCB family. As to quaternary structure, acetyl-CoA carboxylase is a heterohexamer composed of biotin carboxyl carrier protein (AccB), biotin carboxylase (AccC) and two subunits each of ACCase subunit alpha (AccA) and ACCase subunit beta (AccD). The cofactor is Zn(2+).

Its subcellular location is the cytoplasm. It carries out the reaction N(6)-carboxybiotinyl-L-lysyl-[protein] + acetyl-CoA = N(6)-biotinyl-L-lysyl-[protein] + malonyl-CoA. The protein operates within lipid metabolism; malonyl-CoA biosynthesis; malonyl-CoA from acetyl-CoA: step 1/1. Its function is as follows. Component of the acetyl coenzyme A carboxylase (ACC) complex. Biotin carboxylase (BC) catalyzes the carboxylation of biotin on its carrier protein (BCCP) and then the CO(2) group is transferred by the transcarboxylase to acetyl-CoA to form malonyl-CoA. The chain is Acetyl-coenzyme A carboxylase carboxyl transferase subunit beta from Lactobacillus delbrueckii subsp. bulgaricus (strain ATCC BAA-365 / Lb-18).